A 254-amino-acid chain; its full sequence is uncharacterized protein (254 aa).

It belongs to the methyltransferase superfamily.

This is an uncharacterized protein from Mycobacterium tuberculosis (strain ATCC 25177 / H37Ra).